We begin with the raw amino-acid sequence, 165 residues long: Large ribosomal subunit protein uL10 (165 aa).

This sequence belongs to the universal ribosomal protein uL10 family. As to quaternary structure, part of the ribosomal stalk of the 50S ribosomal subunit. The N-terminus interacts with L11 and the large rRNA to form the base of the stalk. The C-terminus forms an elongated spine to which L12 dimers bind in a sequential fashion forming a multimeric L10(L12)X complex.

In terms of biological role, forms part of the ribosomal stalk, playing a central role in the interaction of the ribosome with GTP-bound translation factors. This Halalkalibacterium halodurans (strain ATCC BAA-125 / DSM 18197 / FERM 7344 / JCM 9153 / C-125) (Bacillus halodurans) protein is Large ribosomal subunit protein uL10 (rplJ).